The primary structure comprises 398 residues: 4-hydroxy-3-methylbut-2-enyl diphosphate reductase (398 aa).

Cys-66 serves as a coordination point for [4Fe-4S] cluster. His-96 provides a ligand contact to (2E)-4-hydroxy-3-methylbut-2-enyl diphosphate. His-96 provides a ligand contact to dimethylallyl diphosphate. His-96 is an isopentenyl diphosphate binding site. [4Fe-4S] cluster is bound at residue Cys-157. (2E)-4-hydroxy-3-methylbut-2-enyl diphosphate is bound at residue His-185. Residue His-185 coordinates dimethylallyl diphosphate. Position 185 (His-185) interacts with isopentenyl diphosphate. Residue Glu-187 is the Proton donor of the active site. Thr-250 contributes to the (2E)-4-hydroxy-3-methylbut-2-enyl diphosphate binding site. Cys-288 is a [4Fe-4S] cluster binding site. Residues Ser-317, Ser-318, Asn-319, and Ser-379 each contribute to the (2E)-4-hydroxy-3-methylbut-2-enyl diphosphate site. Positions 317, 318, 319, and 379 each coordinate dimethylallyl diphosphate. 4 residues coordinate isopentenyl diphosphate: Ser-317, Ser-318, Asn-319, and Ser-379.

The protein belongs to the IspH family. Requires [4Fe-4S] cluster as cofactor.

The enzyme catalyses isopentenyl diphosphate + 2 oxidized [2Fe-2S]-[ferredoxin] + H2O = (2E)-4-hydroxy-3-methylbut-2-enyl diphosphate + 2 reduced [2Fe-2S]-[ferredoxin] + 2 H(+). The catalysed reaction is dimethylallyl diphosphate + 2 oxidized [2Fe-2S]-[ferredoxin] + H2O = (2E)-4-hydroxy-3-methylbut-2-enyl diphosphate + 2 reduced [2Fe-2S]-[ferredoxin] + 2 H(+). It functions in the pathway isoprenoid biosynthesis; dimethylallyl diphosphate biosynthesis; dimethylallyl diphosphate from (2E)-4-hydroxy-3-methylbutenyl diphosphate: step 1/1. The protein operates within isoprenoid biosynthesis; isopentenyl diphosphate biosynthesis via DXP pathway; isopentenyl diphosphate from 1-deoxy-D-xylulose 5-phosphate: step 6/6. In terms of biological role, catalyzes the conversion of 1-hydroxy-2-methyl-2-(E)-butenyl 4-diphosphate (HMBPP) into a mixture of isopentenyl diphosphate (IPP) and dimethylallyl diphosphate (DMAPP). Acts in the terminal step of the DOXP/MEP pathway for isoprenoid precursor biosynthesis. This Prochlorococcus marinus (strain MIT 9313) protein is 4-hydroxy-3-methylbut-2-enyl diphosphate reductase.